The primary structure comprises 497 residues: MQPYTTVKDEAHVKALTHVPRNKDENGSAFHGVTFLKQLTMDNPNHKNVEIWLNNSFIESNNPNKIDLQSNGWYRYTGEQDLSKVVSILLYINDSLSSSDVAKMNLVYGTHKNGFGDQYVSKTVVNTSVDYKLSPISNQVRYTIVANANIGLRKIRIDTAPAESGLPVTVRLDKDIVYEDSSKDEITVNLYDKADNRLVGSKVYTIGELPEEIKFKVDRKFLKKKSKRNYEVRFEKINKESIFVAEGKNKVDTDGYTSSEETVKANSKESTELKYKGVIMTEREVGKEMEVFHETLTIPLKQLPKQKTGYGFELKTEASYNNELAVPYDIKVGALIDKKLIDSHLNYEQKEGNTYVPLEETNKNISSDKRNNDFTFELPHVNVEQKTGALFTDQQVKDKDSRIKNALKDGKRKLYAPIWADLGDYNIFVKSELPIGANKVNFEVTQPLHVYAFMYGTIGSDTLKDDEILVEPVDPRNPFSNGKPSGWSDEDVAWLKR.

A disordered region spans residues 474-497; it reads DPRNPFSNGKPSGWSDEDVAWLKR. Positions 488–497 are enriched in acidic residues; it reads SDEDVAWLKR.

This is an uncharacterized protein from Bacillus anthracis.